A 259-amino-acid polypeptide reads, in one-letter code: Bisphosphoglycerate mutase (259 aa).

The residue at position 2 (S2) is an N-acetylserine. Residues 10-17, 23-24, R62, 89-92, R100, and 116-117 contribute to the substrate site; these read RHGEGAWN, CS, ERHY, and RR. H11 acts as the Tele-phosphohistidine intermediate in catalysis. E89 functions as the Proton donor/acceptor in the catalytic mechanism. Position 122 is a phosphothreonine (T122). Residue 189-190 participates in substrate binding; it reads GN.

It belongs to the phosphoglycerate mutase family. BPG-dependent PGAM subfamily. In terms of assembly, homodimer.

The enzyme catalyses (2R)-3-phospho-glyceroyl phosphate = (2R)-2,3-bisphosphoglycerate + H(+). It carries out the reaction (2R)-2-phosphoglycerate = (2R)-3-phosphoglycerate. At alkaline pH BPGM favors the synthase reaction; however, at lower pH the phosphatase reaction is dominant. Inhibited by citrate. In terms of biological role, plays a major role in regulating hemoglobin oxygen affinity by controlling the levels of its allosteric effector 2,3-bisphosphoglycerate (2,3-BPG). Also exhibits mutase (EC 5.4.2.11) activity. This chain is Bisphosphoglycerate mutase (BPGM), found in Macaca fascicularis (Crab-eating macaque).